The sequence spans 137 residues: Phosphoribosyl-ATP pyrophosphatase (137 aa).

Over residues Glu-114 to Leu-124 the composition is skewed to basic and acidic residues. Residues Glu-114–Pro-137 form a disordered region.

Belongs to the PRA-PH family.

It localises to the cytoplasm. The catalysed reaction is 1-(5-phospho-beta-D-ribosyl)-ATP + H2O = 1-(5-phospho-beta-D-ribosyl)-5'-AMP + diphosphate + H(+). It functions in the pathway amino-acid biosynthesis; L-histidine biosynthesis; L-histidine from 5-phospho-alpha-D-ribose 1-diphosphate: step 2/9. The sequence is that of Phosphoribosyl-ATP pyrophosphatase from Paracidovorax citrulli (strain AAC00-1) (Acidovorax citrulli).